The following is a 245-amino-acid chain: tRNA pseudouridine synthase A (245 aa).

Aspartate 52 acts as the Nucleophile in catalysis. Residue tyrosine 111 coordinates substrate.

This sequence belongs to the tRNA pseudouridine synthase TruA family. Homodimer.

It catalyses the reaction uridine(38/39/40) in tRNA = pseudouridine(38/39/40) in tRNA. Its function is as follows. Formation of pseudouridine at positions 38, 39 and 40 in the anticodon stem and loop of transfer RNAs. This Zymomonas mobilis subsp. mobilis (strain ATCC 31821 / ZM4 / CP4) protein is tRNA pseudouridine synthase A.